Consider the following 56-residue polypeptide: Small ribosomal subunit protein uS14 (56 aa).

Positions 21, 24, 39, and 42 each coordinate Zn(2+).

The protein belongs to the universal ribosomal protein uS14 family. In terms of assembly, component of the small ribosomal subunit (SSU). Mature N.crassa ribosomes consist of a small (40S) and a large (60S) subunit. The 40S small subunit contains 1 molecule of ribosomal RNA (18S rRNA) and at least 32 different proteins. The large 60S subunit contains 3 rRNA molecules (26S, 5.8S and 5S rRNA) and at least 42 different proteins. Zn(2+) is required as a cofactor.

Its subcellular location is the cytoplasm. Its function is as follows. Component of the ribosome, a large ribonucleoprotein complex responsible for the synthesis of proteins in the cell. The small ribosomal subunit (SSU) binds messenger RNAs (mRNAs) and translates the encoded message by selecting cognate aminoacyl-transfer RNA (tRNA) molecules. The large subunit (LSU) contains the ribosomal catalytic site termed the peptidyl transferase center (PTC), which catalyzes the formation of peptide bonds, thereby polymerizing the amino acids delivered by tRNAs into a polypeptide chain. The nascent polypeptides leave the ribosome through a tunnel in the LSU and interact with protein factors that function in enzymatic processing, targeting, and the membrane insertion of nascent chains at the exit of the ribosomal tunnel. This chain is Small ribosomal subunit protein uS14 (rps-29), found in Neurospora crassa (strain ATCC 24698 / 74-OR23-1A / CBS 708.71 / DSM 1257 / FGSC 987).